Reading from the N-terminus, the 168-residue chain is 2-C-methyl-D-erythritol 2,4-cyclodiphosphate synthase (168 aa).

A divalent metal cation-binding residues include D11 and H13. 4-CDP-2-C-methyl-D-erythritol 2-phosphate is bound by residues 11-13 (DVH) and 41-42 (HS). Residue H49 participates in a divalent metal cation binding. Residues 63-65 (DIG), 68-72 (FPDTD), 139-142 (TTTE), F146, and R149 each bind 4-CDP-2-C-methyl-D-erythritol 2-phosphate.

The protein belongs to the IspF family. As to quaternary structure, homotrimer. It depends on a divalent metal cation as a cofactor.

The catalysed reaction is 4-CDP-2-C-methyl-D-erythritol 2-phosphate = 2-C-methyl-D-erythritol 2,4-cyclic diphosphate + CMP. It participates in isoprenoid biosynthesis; isopentenyl diphosphate biosynthesis via DXP pathway; isopentenyl diphosphate from 1-deoxy-D-xylulose 5-phosphate: step 4/6. Its function is as follows. Involved in the biosynthesis of isopentenyl diphosphate (IPP) and dimethylallyl diphosphate (DMAPP), two major building blocks of isoprenoid compounds. Catalyzes the conversion of 4-diphosphocytidyl-2-C-methyl-D-erythritol 2-phosphate (CDP-ME2P) to 2-C-methyl-D-erythritol 2,4-cyclodiphosphate (ME-CPP) with a corresponding release of cytidine 5-monophosphate (CMP). In Psychrobacter arcticus (strain DSM 17307 / VKM B-2377 / 273-4), this protein is 2-C-methyl-D-erythritol 2,4-cyclodiphosphate synthase.